Reading from the N-terminus, the 857-residue chain is Protein STICHEL-like 2 (857 aa).

280–287 (GPRGTGKT) contacts ATP. The Zn(2+) site is built by Cys299, Cys309, Cys312, and Cys315. Residues 544 to 576 (LTRHTSEEEMQKLRNALKILSDAEKHLRASKNQ) adopt a coiled-coil conformation. Disordered regions lie at residues 593 to 629 (SSFA…DAEK) and 787 to 845 (ASSR…SSRL). A compositionally biased stretch (basic and acidic residues) spans 599 to 610 (ENGRNQINKDVE). The segment covering 834-843 (QSETQNSKSS) has biased composition (polar residues).

The protein belongs to the DnaX/STICHEL family.

This is Protein STICHEL-like 2 from Arabidopsis thaliana (Mouse-ear cress).